Consider the following 513-residue polypeptide: ATP synthase subunit alpha (513 aa).

169-176 (GDRKTGKS) contacts ATP.

This sequence belongs to the ATPase alpha/beta chains family. As to quaternary structure, F-type ATPases have 2 components, CF(1) - the catalytic core - and CF(0) - the membrane proton channel. CF(1) has five subunits: alpha(3), beta(3), gamma(1), delta(1), epsilon(1). CF(0) has three main subunits: a(1), b(2) and c(9-12). The alpha and beta chains form an alternating ring which encloses part of the gamma chain. CF(1) is attached to CF(0) by a central stalk formed by the gamma and epsilon chains, while a peripheral stalk is formed by the delta and b chains.

It localises to the cell membrane. It catalyses the reaction ATP + H2O + 4 H(+)(in) = ADP + phosphate + 5 H(+)(out). In terms of biological role, produces ATP from ADP in the presence of a proton gradient across the membrane. The alpha chain is a regulatory subunit. This Levilactobacillus brevis (strain ATCC 367 / BCRC 12310 / CIP 105137 / JCM 1170 / LMG 11437 / NCIMB 947 / NCTC 947) (Lactobacillus brevis) protein is ATP synthase subunit alpha.